We begin with the raw amino-acid sequence, 400 residues long: FPYQGSSTILESGNVNDYEVVYPRKVTALPKGAVQQKYEDAMQYEFKVNGEPVVLHLEKNKGLFSKDYSEIHYSPDGRRITTHPLVEDHCYYRGHIRNDADSTASISACNGLKGHFKLRGETYLIEPMKISNSEAHAVYKYENVEKEDEAHKMCGVTQNWESYEPIKKASQLIVSTEFQRYMEIVIVVDHSMYTKYKGDSDKIKAWVYEMINTISESYRYLYIDIIVSALEMWSEKDLINVETSAENTLKSFGEWRAKDLIHRISHDNAQLLTATDFDGPTIGLAYVASMCDPKRSVGVVQDHSSVNHLVAITLAHEIAHNLGVHHDKSSCSCGSGYTCIMSPVINSEVIKYFSDCSYIQCREYISKENPPCILNKPLRTDTVSTPVSGNELLEAGKDYD.

An N-terminal signal peptide occupies residues 1–6 (FPYQGS). A propeptide spanning residues 7–176 (STILESGNVN…KKASQLIVST (170 aa)) is cleaved from the precursor. One can recognise a Peptidase M12B domain in the interval 180–377 (RYMEIVIVVD…ENPPCILNKP (198 aa)). Residues glutamate 183 and aspartate 267 each contribute to the Ca(2+) site. 3 disulfides stabilise this stretch: cysteine 291-cysteine 372, cysteine 331-cysteine 356, and cysteine 333-cysteine 339. Position 316 (histidine 316) interacts with Zn(2+). Glutamate 317 is a catalytic residue. Zn(2+) is bound by residues histidine 320 and histidine 326. Ca(2+) contacts are provided by cysteine 372, asparagine 375, valine 387, asparagine 390, leucine 392, glutamate 394, and aspartate 400. The propeptide occupies 378 to 400 (LRTDTVSTPVSGNELLEAGKDYD).

The protein belongs to the venom metalloproteinase (M12B) family. P-I subfamily. Monomer. Zn(2+) serves as cofactor. As to expression, expressed by the venom gland.

The protein localises to the secreted. Its function is as follows. Snake venom metalloproteinase that impairs hemostasis in the envenomed animal. This chain is Snake venom metalloproteinase H2, found in Deinagkistrodon acutus (Hundred-pace snake).